Reading from the N-terminus, the 306-residue chain is uncharacterized protein (306 aa).

This is an uncharacterized protein from Haemophilus influenzae (strain ATCC 51907 / DSM 11121 / KW20 / Rd).